The following is a 636-amino-acid chain: ABC transporter ATP-binding protein RamA (636 aa).

Transmembrane regions (helical) follow at residues 45-65 (VLVL…PLAL), 78-98 (AGWW…LDSA), 175-195 (LVDV…ALLL), 269-289 (GVLV…RLAA), and 297-317 (LLAV…ASLL). Residues 45 to 322 (VLVLLCSVAA…AASLLGAIVR (278 aa)) enclose the ABC transmembrane type-1 domain. An ABC transporter domain is found at 354 to 585 (LRLCGVRVLR…AGYREVFGAG (232 aa)). Residue 386 to 393 (GRSGAGKS) participates in ATP binding. Residues 589 to 606 (GAGAGAGAGADAGAGADA) are compositionally biased toward gly residues. The interval 589–636 (GAGAGAGAGADAGAGADAGPGPDSGAATAVGGSGPGPVRRPEPEEARP) is disordered. A compositionally biased stretch (low complexity) spans 607-618 (GPGPDSGAATAV). The span at 627–636 (RRPEPEEARP) shows a compositional bias: basic and acidic residues.

This sequence belongs to the ABC transporter superfamily.

It localises to the cell membrane. Functionally, probably involved in exporting SapB from the cell. Expression of the ram locus (ramA, ramB and ramR) induces rapid aerial mycelium formation in S.lividans. The polypeptide is ABC transporter ATP-binding protein RamA (Streptomyces coelicolor (strain ATCC BAA-471 / A3(2) / M145)).